The primary structure comprises 180 residues: ATP-dependent protease subunit HslV (180 aa).

The active site involves Thr-6. Positions 164, 167, and 170 each coordinate Na(+).

The protein belongs to the peptidase T1B family. HslV subfamily. In terms of assembly, a double ring-shaped homohexamer of HslV is capped on each side by a ring-shaped HslU homohexamer. The assembly of the HslU/HslV complex is dependent on binding of ATP.

Its subcellular location is the cytoplasm. It carries out the reaction ATP-dependent cleavage of peptide bonds with broad specificity.. With respect to regulation, allosterically activated by HslU binding. Protease subunit of a proteasome-like degradation complex believed to be a general protein degrading machinery. The sequence is that of ATP-dependent protease subunit HslV from Borrelia recurrentis (strain A1).